We begin with the raw amino-acid sequence, 79 residues long: Short neurotoxin 8 (79 aa).

Residues 1-21 form the signal peptide; it reads MKTLLLTLVMVTIMCLDLGYT. Cystine bridges form between Cys-24/Cys-41, Cys-34/Cys-59, Cys-63/Cys-71, and Cys-72/Cys-77.

Belongs to the three-finger toxin family. Short-chain subfamily. Type III alpha-neurotoxin sub-subfamily. Expressed by the venom gland.

The protein resides in the secreted. Functionally, binds with high affinity to muscle nicotinic acetylcholine receptor (nAChR) and hinders acetylcholine binding to the receptor, thereby impairing neuromuscular transmission. Causes muscle paralysis, spasms and increased respiration. This Pseudonaja textilis (Eastern brown snake) protein is Short neurotoxin 8.